We begin with the raw amino-acid sequence, 404 residues long: 26S proteasome regulatory subunit 6A-B (404 aa).

192-199 is an ATP binding site; the sequence is GPPGTGKT.

This sequence belongs to the AAA ATPase family. In terms of assembly, may form a heterodimer with a related family member.

The protein localises to the cytoplasm. The protein resides in the nucleus. Functionally, the 26S proteasome is involved in the ATP-dependent degradation of ubiquitinated proteins. The regulatory (or ATPase) complex confers ATP dependency and substrate specificity to the 26S complex. The chain is 26S proteasome regulatory subunit 6A-B (psmc3-b) from Xenopus laevis (African clawed frog).